The following is a 279-amino-acid chain: Putative pyruvate, phosphate dikinase regulatory protein (279 aa).

152-159 (GVSRTSKS) is an ADP binding site.

It belongs to the pyruvate, phosphate/water dikinase regulatory protein family. PDRP subfamily.

It carries out the reaction N(tele)-phospho-L-histidyl/L-threonyl-[pyruvate, phosphate dikinase] + ADP = N(tele)-phospho-L-histidyl/O-phospho-L-threonyl-[pyruvate, phosphate dikinase] + AMP + H(+). It catalyses the reaction N(tele)-phospho-L-histidyl/O-phospho-L-threonyl-[pyruvate, phosphate dikinase] + phosphate + H(+) = N(tele)-phospho-L-histidyl/L-threonyl-[pyruvate, phosphate dikinase] + diphosphate. Functionally, bifunctional serine/threonine kinase and phosphorylase involved in the regulation of the pyruvate, phosphate dikinase (PPDK) by catalyzing its phosphorylation/dephosphorylation. The polypeptide is Putative pyruvate, phosphate dikinase regulatory protein (Anaplasma marginale (strain St. Maries)).